Reading from the N-terminus, the 558-residue chain is Probable rhamnogalacturonase B (558 aa).

The first 21 residues, 1–21, serve as a signal peptide directing secretion; it reads MLLDKLSVLSFLGLAPIFAAA. Cysteines 42 and 68 form a disulfide. Asn-145 is a glycosylation site (N-linked (GlcNAc...) asparagine). The Proton donor role is filled by Asp-219. Cys-221 and Cys-238 are joined by a disulfide. Residues Asn-239 and Asn-254 are each glycosylated (N-linked (GlcNAc...) asparagine). His-294 is an active-site residue. An N-linked (GlcNAc...) asparagine glycan is attached at Asn-321. 2 cysteine pairs are disulfide-bonded: Cys-344–Cys-350 and Cys-372–Cys-381. Over residues 503–526 the composition is skewed to low complexity; the sequence is VGAQEGSTTSAPSFAAPSGAGNSP. The segment at 503–558 is disordered; the sequence is VGAQEGSTTSAPSFAAPSGAGNSPQGPTGASGFGEKGQQGEQGEQGEQGEQGVCYV.

Belongs to the glycosyl hydrolase 28 family.

It localises to the secreted. It catalyses the reaction Endohydrolysis of alpha-D-GalA-(1-&gt;2)-alpha-L-Rha glycosidic bond in the rhamnogalacturonan I backbone with initial inversion of anomeric configuration releasing oligosaccharides with beta-D-GalA at the reducing end.. Functionally, pectinolytic enzymes consist of four classes of enzymes: pectine lyase, polygalacturonase, pectin methylesterase and rhamnogalacturonase. Hydrolyzes alpha-D-galacturonopyranosyl-(1,2)-alpha-L-rhamnopyranosyl linkages in the backbone of the hairy regions of pectins. This is Probable rhamnogalacturonase B (rhgB) from Aspergillus niger (strain ATCC MYA-4892 / CBS 513.88 / FGSC A1513).